Reading from the N-terminus, the 252-residue chain is Triosephosphate isomerase (252 aa).

Residue 10–12 (NWK) coordinates substrate. His96 serves as the catalytic Electrophile. The active-site Proton acceptor is the Glu168. Substrate is bound by residues Gly174, Ser214, and 235-236 (GG).

It belongs to the triosephosphate isomerase family. As to quaternary structure, homodimer.

It localises to the cytoplasm. It catalyses the reaction D-glyceraldehyde 3-phosphate = dihydroxyacetone phosphate. The protein operates within carbohydrate biosynthesis; gluconeogenesis. Its pathway is carbohydrate degradation; glycolysis; D-glyceraldehyde 3-phosphate from glycerone phosphate: step 1/1. Involved in the gluconeogenesis. Catalyzes stereospecifically the conversion of dihydroxyacetone phosphate (DHAP) to D-glyceraldehyde-3-phosphate (G3P). The polypeptide is Triosephosphate isomerase (Streptococcus agalactiae serotype Ia (strain ATCC 27591 / A909 / CDC SS700)).